The sequence spans 396 residues: Putative F-box/kelch-repeat protein At3g17540 (396 aa).

The F-box domain maps to 4–50 (TMVISDLPHEIESEILSRVPTKSLAKLHTTCKRWYALFRDPRFVKKN). 3 Kelch repeats span residues 163-209 (LRYC…GMSL), 253-299 (VLSI…FLAV), and 338-386 (RIYI…KRKG).

This is Putative F-box/kelch-repeat protein At3g17540 from Arabidopsis thaliana (Mouse-ear cress).